The chain runs to 473 residues: Adenosylhomocysteinase (473 aa).

Substrate contacts are provided by Thr-64, Asp-139, and Glu-199. An NAD(+)-binding site is contributed by 200–202 (TTT). The substrate site is built by Lys-229 and Asp-233. Residues Asn-234, 263–268 (GYGDVG), Glu-286, Asn-321, 342–344 (IGH), and Asn-387 each bind NAD(+).

This sequence belongs to the adenosylhomocysteinase family. It depends on NAD(+) as a cofactor.

Its subcellular location is the cytoplasm. The enzyme catalyses S-adenosyl-L-homocysteine + H2O = L-homocysteine + adenosine. Its pathway is amino-acid biosynthesis; L-homocysteine biosynthesis; L-homocysteine from S-adenosyl-L-homocysteine: step 1/1. May play a key role in the regulation of the intracellular concentration of adenosylhomocysteine. The polypeptide is Adenosylhomocysteinase (Burkholderia thailandensis (strain ATCC 700388 / DSM 13276 / CCUG 48851 / CIP 106301 / E264)).